The following is a 330-amino-acid chain: D-cysteine desulfhydrase (330 aa).

Lys-52 carries the N6-(pyridoxal phosphate)lysine modification.

It belongs to the ACC deaminase/D-cysteine desulfhydrase family. Homodimer. Pyridoxal 5'-phosphate serves as cofactor.

The enzyme catalyses D-cysteine + H2O = hydrogen sulfide + pyruvate + NH4(+) + H(+). Its function is as follows. Catalyzes the alpha,beta-elimination reaction of D-cysteine and of several D-cysteine derivatives. It could be a defense mechanism against D-cysteine. The chain is D-cysteine desulfhydrase from Serratia proteamaculans (strain 568).